The following is a 198-amino-acid chain: Single-stranded DNA cytosine deaminase (198 aa).

The Bipartite nuclear localization signal signature appears at 1–30 (MDSLLMKQKKFLYHFKNVRWAKGRHETYLC). Positions 2–26 (DSLLMKQKKFLYHFKNVRWAKGRHE) are interaction with SUPT6H. A CMP/dCMP-type deaminase domain is found at 23 to 129 (GRHETYLCYV…KAEPEGLRRL (107 aa)). Thr-27 carries the post-translational modification Phosphothreonine; by PKA. At Ser-38 the chain carries Phosphoserine; by PKA. The important for interaction with CTNNBL1 stretch occupies residues 39-42 (ATSC). Position 56 (His-56) interacts with Zn(2+). Glu-58 acts as the Proton donor in catalysis. 2 residues coordinate Zn(2+): Cys-87 and Cys-90. The segment at 88–116 (YDCARHVAEFLRWNPNLSLRIFTARLYFC) is required for interaction with RNF126. A Nuclear export signal motif is present at residues 183–198 (LYEVDDLRDAFRMLGF).

The protein belongs to the cytidine and deoxycytidylate deaminase family. In terms of assembly, interacts with CTNNBL1; the interaction is important for the immunoglobulin switch activity of AICDA. Interacts (via its NLS) with KPNA1. Interacts with PKA/PRKACA and PRKAR1A/PKR1. Interacts with SUPT6H, TRIM28 and NCL. Directly interacts with MCM3AP/GANP; this interaction may favor AICDA recruitment to immunoglobulin variable region genes, hence promoting somatic hypermutations. The cofactor is Zn(2+). Ser-38 is the major site whereas Thr-27 is the minor site of phosphorylation. Phosphorylation regulates its class-switch recombination activity. Post-translationally, probably monoubiquitinated on several residues by RNF126. Expressed in germinal center B-cells (at protein level).

The protein localises to the nucleus. Its subcellular location is the cytoplasm. It carries out the reaction a 2'-deoxycytidine in single-stranded DNA + H2O + H(+) = a 2'-deoxyuridine in single-stranded DNA + NH4(+). Single-stranded DNA-specific cytidine deaminase. Involved in somatic hypermutation (SHM), gene conversion, and class-switch recombination (CSR) in B-lymphocytes by deaminating C to U during transcription of Ig-variable (V) and Ig-switch (S) region DNA. Required for several crucial steps of B-cell terminal differentiation necessary for efficient antibody responses. May also play a role in the epigenetic regulation of gene expression by participating in DNA demethylation. The protein is Single-stranded DNA cytosine deaminase (Aicda) of Mus musculus (Mouse).